Here is a 253-residue protein sequence, read N- to C-terminus: Glucosamine-6-phosphate deaminase (253 aa).

D67 functions as the Proton acceptor; for enolization step in the catalytic mechanism. N136 functions as the For ring-opening step in the catalytic mechanism. H138 acts as the Proton acceptor; for ring-opening step in catalysis. E143 serves as the catalytic For ring-opening step.

The protein belongs to the glucosamine/galactosamine-6-phosphate isomerase family. NagB subfamily.

It carries out the reaction alpha-D-glucosamine 6-phosphate + H2O = beta-D-fructose 6-phosphate + NH4(+). Its pathway is amino-sugar metabolism; N-acetylneuraminate degradation; D-fructose 6-phosphate from N-acetylneuraminate: step 5/5. In terms of biological role, catalyzes the reversible isomerization-deamination of glucosamine 6-phosphate (GlcN6P) to form fructose 6-phosphate (Fru6P) and ammonium ion. The polypeptide is Glucosamine-6-phosphate deaminase (Thermoanaerobacter pseudethanolicus (strain ATCC 33223 / 39E) (Clostridium thermohydrosulfuricum)).